Reading from the N-terminus, the 295-residue chain is Protein SCO1, mitochondrial (295 aa).

Residues 76-92 (AIALFLAVGGALSYFFN) traverse the membrane as a helical segment. Cu cation contacts are provided by Cys-148, Cys-152, and His-239.

It belongs to the SCO1/2 family.

The protein resides in the mitochondrion inner membrane. Its function is as follows. Required for the accumulation of subunits 1 and 2 of cytochrome c oxidase complex. Thought to play a role in either mitochondrial copper transport or insertion of copper into the active site of COX. This is Protein SCO1, mitochondrial (SCO1) from Saccharomyces cerevisiae (strain ATCC 204508 / S288c) (Baker's yeast).